The primary structure comprises 880 residues: Protein translocase subunit SecA (880 aa).

Residues glutamine 87, 105 to 109, and aspartate 501 contribute to the ATP site; that span reads GEGKT. The Zn(2+) site is built by cysteine 864, cysteine 866, cysteine 875, and histidine 876.

It belongs to the SecA family. As to quaternary structure, monomer and homodimer. Part of the essential Sec protein translocation apparatus which comprises SecA, SecYEG and auxiliary proteins SecDF-YajC and YidC. It depends on Zn(2+) as a cofactor.

It is found in the cell inner membrane. The protein localises to the cytoplasm. The enzyme catalyses ATP + H2O + cellular proteinSide 1 = ADP + phosphate + cellular proteinSide 2.. Part of the Sec protein translocase complex. Interacts with the SecYEG preprotein conducting channel. Has a central role in coupling the hydrolysis of ATP to the transfer of proteins into and across the cell membrane, serving both as a receptor for the preprotein-SecB complex and as an ATP-driven molecular motor driving the stepwise translocation of polypeptide chains across the membrane. The protein is Protein translocase subunit SecA of Orientia tsutsugamushi (strain Boryong) (Rickettsia tsutsugamushi).